The chain runs to 208 residues: NAD(P)H-quinone oxidoreductase subunit I (208 aa).

4Fe-4S ferredoxin-type domains follow at residues 55–84 (GRIHYEFDKCIACEVCVRVCPINLPVVDWV) and 95–124 (RNYSIDFGVCIFCGNCVEYCPTNCLSMTEE). [4Fe-4S] cluster contacts are provided by C64, C67, C70, C74, C104, C107, C110, and C114.

This sequence belongs to the complex I 23 kDa subunit family. As to quaternary structure, NDH-1 is composed of at least 11 different subunits. Requires [4Fe-4S] cluster as cofactor.

It is found in the cellular thylakoid membrane. The catalysed reaction is a plastoquinone + NADH + (n+1) H(+)(in) = a plastoquinol + NAD(+) + n H(+)(out). The enzyme catalyses a plastoquinone + NADPH + (n+1) H(+)(in) = a plastoquinol + NADP(+) + n H(+)(out). In terms of biological role, NDH-1 shuttles electrons from an unknown electron donor, via FMN and iron-sulfur (Fe-S) centers, to quinones in the respiratory and/or the photosynthetic chain. The immediate electron acceptor for the enzyme in this species is believed to be plastoquinone. Couples the redox reaction to proton translocation, and thus conserves the redox energy in a proton gradient. This Prochlorococcus marinus (strain MIT 9215) protein is NAD(P)H-quinone oxidoreductase subunit I.